A 269-amino-acid polypeptide reads, in one-letter code: Putative pyruvate, phosphate dikinase regulatory protein (269 aa).

147 to 154 lines the ADP pocket; sequence GVSRTSKT.

The protein belongs to the pyruvate, phosphate/water dikinase regulatory protein family. PDRP subfamily.

It catalyses the reaction N(tele)-phospho-L-histidyl/L-threonyl-[pyruvate, phosphate dikinase] + ADP = N(tele)-phospho-L-histidyl/O-phospho-L-threonyl-[pyruvate, phosphate dikinase] + AMP + H(+). The enzyme catalyses N(tele)-phospho-L-histidyl/O-phospho-L-threonyl-[pyruvate, phosphate dikinase] + phosphate + H(+) = N(tele)-phospho-L-histidyl/L-threonyl-[pyruvate, phosphate dikinase] + diphosphate. Functionally, bifunctional serine/threonine kinase and phosphorylase involved in the regulation of the pyruvate, phosphate dikinase (PPDK) by catalyzing its phosphorylation/dephosphorylation. This is Putative pyruvate, phosphate dikinase regulatory protein from Geotalea daltonii (strain DSM 22248 / JCM 15807 / FRC-32) (Geobacter daltonii).